Here is a 740-residue protein sequence, read N- to C-terminus: Ethylene receptor 1 (740 aa).

3 helical membrane passes run 23–43, 53–73, and 92–112; these read ISDF…IYFV, WVLV…LINL, and VLTA…IPDL. C65 and H69 together coordinate Cu cation. One can recognise a GAF domain in the interval 158–307; it reads DRHTILKTTL…VVADQVAVAL (150 aa). A Histidine kinase domain is found at 350-588; it reads VMNHEMRTPM…TFIVKLGIAE (239 aa). H353 carries the phosphohistidine; by autocatalysis modification. In terms of domain architecture, Response regulatory spans 614–731; that stretch reads KVLVMDDNGV…KMRSVLSELI (118 aa). D662 carries the post-translational modification 4-aspartylphosphate.

Belongs to the ethylene receptor family. As to quaternary structure, homodimer; disulfide-linked. It depends on Cu cation as a cofactor. In terms of processing, activation probably requires a transfer of a phosphate group between a His in the transmitter domain and an Asp of the receiver domain.

The protein resides in the endoplasmic reticulum membrane. It carries out the reaction ATP + protein L-histidine = ADP + protein N-phospho-L-histidine.. In terms of biological role, may act early in the ethylene signal transduction pathway, possibly as an ethylene receptor, or as a regulator of the pathway. The protein is Ethylene receptor 1 (ETR1) of Cucumis sativus (Cucumber).